The following is a 364-amino-acid chain: Aminomethyltransferase (364 aa).

The protein belongs to the GcvT family. As to quaternary structure, the glycine cleavage system is composed of four proteins: P, T, L and H.

The catalysed reaction is N(6)-[(R)-S(8)-aminomethyldihydrolipoyl]-L-lysyl-[protein] + (6S)-5,6,7,8-tetrahydrofolate = N(6)-[(R)-dihydrolipoyl]-L-lysyl-[protein] + (6R)-5,10-methylene-5,6,7,8-tetrahydrofolate + NH4(+). Functionally, the glycine cleavage system catalyzes the degradation of glycine. This chain is Aminomethyltransferase, found in Shigella boydii serotype 18 (strain CDC 3083-94 / BS512).